The following is an 89-amino-acid chain: Small ribosomal subunit protein uS14A (89 aa).

The protein belongs to the universal ribosomal protein uS14 family. In terms of assembly, part of the 30S ribosomal subunit. Contacts proteins S3 and S10.

In terms of biological role, binds 16S rRNA, required for the assembly of 30S particles and may also be responsible for determining the conformation of the 16S rRNA at the A site. In Staphylococcus aureus (strain Newman), this protein is Small ribosomal subunit protein uS14A.